A 96-amino-acid polypeptide reads, in one-letter code: Molybdopterin synthase sulfur carrier subunit (96 aa).

Gly-96 bears the 1-thioglycine; alternate mark. Gly-96 bears the Glycyl adenylate; alternate mark.

It belongs to the MoaD family. MOCS2A subfamily. As to quaternary structure, heterotetramer; composed of 2 small (MOCS2A) and 2 large (MOCS2B) subunits. In terms of processing, C-terminal thiocarboxylation occurs in 2 steps, it is first acyl-adenylated (-COAMP) via the hesA/moeB/thiF part of MOCS3, then thiocarboxylated (-COSH) via the rhodanese domain of MOCS3.

It is found in the cytoplasm. It participates in cofactor biosynthesis; molybdopterin biosynthesis. Functionally, acts as a sulfur carrier required for molybdopterin biosynthesis. Component of the molybdopterin synthase complex that catalyzes the conversion of precursor Z into molybdopterin by mediating the incorporation of 2 sulfur atoms into precursor Z to generate a dithiolene group. In the complex, serves as sulfur donor by being thiocarboxylated (-COSH) at its C-terminus by MOCS3. After interaction with MOCS2B, the sulfur is then transferred to precursor Z to form molybdopterin. This Arabidopsis thaliana (Mouse-ear cress) protein is Molybdopterin synthase sulfur carrier subunit.